A 444-amino-acid chain; its full sequence is Phosphoglucosamine mutase (444 aa).

Serine 102 (phosphoserine intermediate) is an active-site residue. Mg(2+)-binding residues include serine 102, aspartate 241, aspartate 243, and aspartate 245. Phosphoserine is present on serine 102.

It belongs to the phosphohexose mutase family. Mg(2+) is required as a cofactor. Post-translationally, activated by phosphorylation.

It catalyses the reaction alpha-D-glucosamine 1-phosphate = D-glucosamine 6-phosphate. Its function is as follows. Catalyzes the conversion of glucosamine-6-phosphate to glucosamine-1-phosphate. The protein is Phosphoglucosamine mutase of Pasteurella multocida (strain Pm70).